A 279-amino-acid polypeptide reads, in one-letter code: Putative pyruvate, phosphate dikinase regulatory protein (279 aa).

156–163 (GISRVGKT) contacts ADP.

Belongs to the pyruvate, phosphate/water dikinase regulatory protein family. PDRP subfamily.

It carries out the reaction N(tele)-phospho-L-histidyl/L-threonyl-[pyruvate, phosphate dikinase] + ADP = N(tele)-phospho-L-histidyl/O-phospho-L-threonyl-[pyruvate, phosphate dikinase] + AMP + H(+). The catalysed reaction is N(tele)-phospho-L-histidyl/O-phospho-L-threonyl-[pyruvate, phosphate dikinase] + phosphate + H(+) = N(tele)-phospho-L-histidyl/L-threonyl-[pyruvate, phosphate dikinase] + diphosphate. Its function is as follows. Bifunctional serine/threonine kinase and phosphorylase involved in the regulation of the pyruvate, phosphate dikinase (PPDK) by catalyzing its phosphorylation/dephosphorylation. The chain is Putative pyruvate, phosphate dikinase regulatory protein from Chloroflexus aurantiacus (strain ATCC 29366 / DSM 635 / J-10-fl).